We begin with the raw amino-acid sequence, 260 residues long: MSTNNSVLVLKVGGALLQCEMGMARLMDTAAAMIANGQQVLMVHGGGCLVDEQLAANGMETVKLEGLRVTPPEQMPIIAGALAGTSNKILQGAATKAGIVSVGMCLADGNTVSAKIKDERLGLVGEVYPKDATYLKFILSQGWMPICSSIAMMDDGQMLNVNADQAATVLAKLVGGKLVLLSDVSGVLDGKGQLIPSLNGQQIADLVKQGVIEKGMKVKVEAALEVAQWMGQAVQVASWRDASQLVALAKGEAVGTQIQP.

Residues 46–47, Arg68, and Asn160 contribute to the substrate site; that span reads GG.

The protein belongs to the acetylglutamate kinase family. ArgB subfamily.

It localises to the cytoplasm. The enzyme catalyses N-acetyl-L-glutamate + ATP = N-acetyl-L-glutamyl 5-phosphate + ADP. The protein operates within amino-acid biosynthesis; L-arginine biosynthesis; N(2)-acetyl-L-ornithine from L-glutamate: step 2/4. In terms of biological role, catalyzes the ATP-dependent phosphorylation of N-acetyl-L-glutamate. In Shewanella oneidensis (strain ATCC 700550 / JCM 31522 / CIP 106686 / LMG 19005 / NCIMB 14063 / MR-1), this protein is Acetylglutamate kinase.